Reading from the N-terminus, the 212-residue chain is Methylthioribulose-1-phosphate dehydratase (212 aa).

H97 and H99 together coordinate Zn(2+).

It belongs to the aldolase class II family. MtnB subfamily. Homotetramer. Requires Zn(2+) as cofactor.

It catalyses the reaction 5-(methylsulfanyl)-D-ribulose 1-phosphate = 5-methylsulfanyl-2,3-dioxopentyl phosphate + H2O. The protein operates within amino-acid biosynthesis; L-methionine biosynthesis via salvage pathway; L-methionine from S-methyl-5-thio-alpha-D-ribose 1-phosphate: step 2/6. In terms of biological role, catalyzes the dehydration of methylthioribulose-1-phosphate (MTRu-1-P) into 2,3-diketo-5-methylthiopentyl-1-phosphate (DK-MTP-1-P). This Bacillus cereus (strain B4264) protein is Methylthioribulose-1-phosphate dehydratase.